Reading from the N-terminus, the 236-residue chain is Regulatory protein cys-3 (236 aa).

The disordered stretch occupies residues 26 to 89 (TLGQLQPIQP…MSVPPTPGAR (64 aa)). Over residues 28–37 (GQLQPIQPNP) the composition is skewed to polar residues. In terms of domain architecture, bZIP spans 99-162 (LAAEEDKRKR…KWLKGLVTEK (64 aa)). The tract at residues 105–137 (KRKRNTAASARFRIKKKQREQALEKSAKEMSEK) is basic motif. A leucine-zipper region spans residues 141 to 155 (LEGRIQALETENKWL). The segment at 189–236 (AAAADKAEAAADKADAERAREESSFCVSTSSPSSDESVDTDNKKRRKD) is disordered. The segment covering 193-211 (DKAEAAADKADAERAREES) has biased composition (basic and acidic residues). Positions 212–223 (SFCVSTSSPSSD) are enriched in low complexity.

This sequence belongs to the bZIP family. GCN4 subfamily. In terms of assembly, binds DNA as a dimer.

The protein localises to the nucleus. Its function is as follows. Turns on the expression of structural genes which encode sulfur-catabolic enzymes. Binds to sequence elements upstream of these genes. The polypeptide is Regulatory protein cys-3 (cys-3) (Neurospora crassa (strain ATCC 24698 / 74-OR23-1A / CBS 708.71 / DSM 1257 / FGSC 987)).